The sequence spans 483 residues: Aspartyl/glutamyl-tRNA(Asn/Gln) amidotransferase subunit B (483 aa).

The protein belongs to the GatB/GatE family. GatB subfamily. Heterotrimer of A, B and C subunits.

It carries out the reaction L-glutamyl-tRNA(Gln) + L-glutamine + ATP + H2O = L-glutaminyl-tRNA(Gln) + L-glutamate + ADP + phosphate + H(+). It catalyses the reaction L-aspartyl-tRNA(Asn) + L-glutamine + ATP + H2O = L-asparaginyl-tRNA(Asn) + L-glutamate + ADP + phosphate + 2 H(+). Its function is as follows. Allows the formation of correctly charged Asn-tRNA(Asn) or Gln-tRNA(Gln) through the transamidation of misacylated Asp-tRNA(Asn) or Glu-tRNA(Gln) in organisms which lack either or both of asparaginyl-tRNA or glutaminyl-tRNA synthetases. The reaction takes place in the presence of glutamine and ATP through an activated phospho-Asp-tRNA(Asn) or phospho-Glu-tRNA(Gln). The sequence is that of Aspartyl/glutamyl-tRNA(Asn/Gln) amidotransferase subunit B from Rickettsia felis (strain ATCC VR-1525 / URRWXCal2) (Rickettsia azadi).